The chain runs to 382 residues: ORC1-type DNA replication protein 1 (382 aa).

ATP-binding positions include 63-67 (TGKTA), Tyr205, and Arg217.

The protein belongs to the CDC6/cdc18 family. In terms of assembly, monomer. Interacts with MCM via the WH domain. Post-translationally, autophosphorylated on a serine. Phosphorylation is stimulated by binding to MCM. Both single-stranded DNA and double-stranded DNA inhibit the phosphorylation reaction.

Involved in regulation of DNA replication. May play an essential role in origin recognition. Binds to DNA, with a preference for origin-specific double-stranded sequences. Does not bind single-stranded DNA. Inhibits MCM helicase activity but does not affect its oligomeric state. The chain is ORC1-type DNA replication protein 1 (cdc6-1) from Methanothermobacter thermautotrophicus (strain ATCC 29096 / DSM 1053 / JCM 10044 / NBRC 100330 / Delta H) (Methanobacterium thermoautotrophicum).